The chain runs to 732 residues: Prolyl endopeptidase-like (732 aa).

Residues serine 575, aspartate 661, and histidine 707 each act as charge relay system in the active site.

Belongs to the peptidase S9A family. In terms of assembly, homodimer.

Its subcellular location is the cytoplasm. The protein localises to the cytosol. In terms of biological role, serine peptidase whose precise substrate specificity remains unclear. Does not cleave peptides after a arginine or lysine residue. Regulates trans-Golgi network morphology and sorting by regulating the membrane binding of the AP-1 complex. May play a role in the regulation of synaptic vesicle exocytosis. The chain is Prolyl endopeptidase-like (PREPL) from Gallus gallus (Chicken).